A 42-amino-acid polypeptide reads, in one-letter code: Lebocin-like anionic peptide 1 (42 aa).

In terms of tissue distribution, hemolymph.

Its subcellular location is the secreted. In terms of biological role, antimicrobial protein. Has antibacterial activity against the Gram-positive bacteria M.luteus (MIC=22.7 uM) and L.monocytogenes (MIC=90.9 uM). Lacks antibacterial activity against the Gram-positive bacteria B.circulans, S.aureus, and S.lutea, and the Gram-negative bacteria E.coli D31, E.coli ATCC 25922, and S.typhimurium. Has antifungal activity against A.niger (MIC=90.9 uM) and T.harzianum (MIC=90.9 uM), but lacks antifungal activity against S.cerevisiae, P.pastoris, Z.marxianus, C.albicans, C.fructus, and F.oxysporum. The sequence is that of Lebocin-like anionic peptide 1 from Galleria mellonella (Greater wax moth).